Reading from the N-terminus, the 178-residue chain is Large ribosomal subunit protein uL6 (178 aa).

It belongs to the universal ribosomal protein uL6 family. Part of the 50S ribosomal subunit. Interacts weakly with protein L13.

Functionally, this protein binds to the 23S rRNA, and is important in its secondary structure. It is located near the subunit interface in the base of the L7/L12 stalk, and near the tRNA binding site of the peptidyltransferase center. This Haloarcula marismortui (strain ATCC 43049 / DSM 3752 / JCM 8966 / VKM B-1809) (Halobacterium marismortui) protein is Large ribosomal subunit protein uL6.